A 367-amino-acid chain; its full sequence is 2-aminoethylphosphonate--pyruvate transaminase (367 aa).

Lysine 194 is modified (N6-(pyridoxal phosphate)lysine).

Belongs to the class-V pyridoxal-phosphate-dependent aminotransferase family. PhnW subfamily. In terms of assembly, homodimer. Pyridoxal 5'-phosphate is required as a cofactor.

The enzyme catalyses (2-aminoethyl)phosphonate + pyruvate = phosphonoacetaldehyde + L-alanine. Involved in phosphonate degradation. This is 2-aminoethylphosphonate--pyruvate transaminase from Klebsiella pneumoniae subsp. pneumoniae (strain ATCC 700721 / MGH 78578).